The chain runs to 382 residues: Na(+)/H(+) antiporter NhaA 2 (382 aa).

A run of 11 helical transmembrane segments spans residues 7 to 27 (MVLS…LALL), 58 to 78 (LDLW…GLEL), 94 to 114 (SLPI…FAAI), 124 to 144 (GWAI…MLLG), 153 to 173 (LFLL…IALF), 178 to 198 (LSAL…LLNY), 199 to 219 (YHIT…IAML), 255 to 275 (NPWV…GIDI), 291 to 311 (IILG…FIAI), 327 to 347 (FYGI…IDGL), and 361 to 381 (LAIL…LKIV).

Belongs to the NhaA Na(+)/H(+) (TC 2.A.33) antiporter family.

It localises to the cell inner membrane. The enzyme catalyses Na(+)(in) + 2 H(+)(out) = Na(+)(out) + 2 H(+)(in). Na(+)/H(+) antiporter that extrudes sodium in exchange for external protons. The chain is Na(+)/H(+) antiporter NhaA 2 from Campylobacter jejuni subsp. jejuni serotype O:6 (strain 81116 / NCTC 11828).